The primary structure comprises 85 residues: Elongation factor 1-beta (85 aa).

Belongs to the EF-1-beta/EF-1-delta family.

Its function is as follows. Promotes the exchange of GDP for GTP in EF-1-alpha/GDP, thus allowing the regeneration of EF-1-alpha/GTP that could then be used to form the ternary complex EF-1-alpha/GTP/AAtRNA. The polypeptide is Elongation factor 1-beta (Methanoregula boonei (strain DSM 21154 / JCM 14090 / 6A8)).